A 367-amino-acid polypeptide reads, in one-letter code: Aminomethyltransferase (367 aa).

This sequence belongs to the GcvT family. The glycine cleavage system is composed of four proteins: P, T, L and H.

It catalyses the reaction N(6)-[(R)-S(8)-aminomethyldihydrolipoyl]-L-lysyl-[protein] + (6S)-5,6,7,8-tetrahydrofolate = N(6)-[(R)-dihydrolipoyl]-L-lysyl-[protein] + (6R)-5,10-methylene-5,6,7,8-tetrahydrofolate + NH4(+). Functionally, the glycine cleavage system catalyzes the degradation of glycine. The protein is Aminomethyltransferase of Shouchella clausii (strain KSM-K16) (Alkalihalobacillus clausii).